A 434-amino-acid polypeptide reads, in one-letter code: Tyrosine-protein phosphatase non-receptor type 1 (434 aa).

Residues 3-277 form the Tyrosine-protein phosphatase domain; the sequence is IEKEFHRLDQ…RFSYLAVIEG (275 aa). The residue at position 50 (Ser50) is a Phosphoserine. Substrate contacts are provided by residues Asp181, 215–221, and Gln262; that span reads CSAGIGR. Cys215 acts as the Phosphocysteine intermediate in catalysis. A disordered region spans residues 291-319; the sequence is WKELSNEDLDPPPEHTPPPPRPPKRTSEM.

This sequence belongs to the protein-tyrosine phosphatase family. Non-receptor class 1 subfamily. Interacts with EPHA3 (phosphorylated); dephosphorylates EPHA3 and may regulate its trafficking and function. Interacts with MET. Interacts with NCK1. Post-translationally, phosphorylated on serine and threonine residues near the N-terminus by casein kinase II (CK2).

It localises to the endoplasmic reticulum membrane. It catalyses the reaction O-phospho-L-tyrosyl-[protein] + H2O = L-tyrosyl-[protein] + phosphate. Its function is as follows. May play an important role in CKII- and p60c-src-induced signal transduction cascades. May regulate the EFNA5-EPHA3 signaling pathway which modulates cell reorganization and cell-cell repulsion. May also regulate the hepatocyte growth factor receptor signaling pathway through dephosphorylation of MET. In Gallus gallus (Chicken), this protein is Tyrosine-protein phosphatase non-receptor type 1 (PTPN1).